Consider the following 85-residue polypeptide: NAD(P)H-quinone oxidoreductase subunit L (85 aa).

Helical transmembrane passes span 17–37 (IVAVLYLGLSLLYLLIIPGFV) and 54–74 (AFMYFLMFFFFPGVLLLSPFL).

Belongs to the complex I NdhL subunit family. NDH-1 can be composed of about 15 different subunits; different subcomplexes with different compositions have been identified which probably have different functions.

It is found in the cellular thylakoid membrane. It carries out the reaction a plastoquinone + NADH + (n+1) H(+)(in) = a plastoquinol + NAD(+) + n H(+)(out). The enzyme catalyses a plastoquinone + NADPH + (n+1) H(+)(in) = a plastoquinol + NADP(+) + n H(+)(out). Its function is as follows. NDH-1 shuttles electrons from an unknown electron donor, via FMN and iron-sulfur (Fe-S) centers, to quinones in the respiratory and/or the photosynthetic chain. The immediate electron acceptor for the enzyme in this species is believed to be plastoquinone. Couples the redox reaction to proton translocation, and thus conserves the redox energy in a proton gradient. Cyanobacterial NDH-1 also plays a role in inorganic carbon-concentration. The protein is NAD(P)H-quinone oxidoreductase subunit L of Crocosphaera subtropica (strain ATCC 51142 / BH68) (Cyanothece sp. (strain ATCC 51142)).